The sequence spans 400 residues: Probable glycosyltransferase WbjE (400 aa).

The protein belongs to the glycosyltransferase group 1 family. Glycosyltransferase 4 subfamily.

It participates in bacterial outer membrane biogenesis; LPS O-antigen biosynthesis. In Pseudomonas aeruginosa, this protein is Probable glycosyltransferase WbjE (wbjE).